The following is a 189-amino-acid chain: UPF0301 protein Plut_0637 (189 aa).

It belongs to the UPF0301 (AlgH) family.

This Chlorobium luteolum (strain DSM 273 / BCRC 81028 / 2530) (Pelodictyon luteolum) protein is UPF0301 protein Plut_0637.